We begin with the raw amino-acid sequence, 814 residues long: Syn-copalyl diphosphate synthase TPS3, chloroplastic (814 aa).

The transit peptide at 1–52 directs the protein to the chloroplast; it reads MCSLSTLSPNFSNAYGSKSVSSTASRFPCWQRSNETWKTQSREVIHWTYVVR. Lys-248 contributes to the substrate binding site. Residues Asp-386 and Asp-388 each contribute to the Mg(2+) site. The short motif at 386–389 is the DXDD motif element; that stretch reads DIDD. Lys-472 contributes to the substrate binding site.

It belongs to the terpene synthase family. Requires Mg(2+) as cofactor. In terms of tissue distribution, mostly expressed in trichomes of leaves and fruits.

It localises to the plastid. Its subcellular location is the chloroplast. It carries out the reaction (2E,6E,10E)-geranylgeranyl diphosphate = 9alpha-copalyl diphosphate. It functions in the pathway secondary metabolite biosynthesis; terpenoid biosynthesis. Involved in the biosynthesis of labdane-type diterpenoid including cleroda-dienols, and peregrinol lactones and furan derivatives, dopaminergic diterpenoids that can bind to dopamine receptors in the human pituitary gland, have probably ability to lower prolactin levels, and are used to treat menstrual cycle disorders (e.g. premenstrual syndrome and mastodynia). Terpene synthase that produces syn-copalyl diphosophate from geranylgeranyl diphosphate (GGPP). This is Syn-copalyl diphosphate synthase TPS3, chloroplastic from Vitex agnus-castus (Chaste tree).